The chain runs to 61 residues: uncharacterized protein (61 aa).

The next 2 helical transmembrane spans lie at I4 to M24 and S34 to M54.

It is found in the cell membrane. This is an uncharacterized protein from Bacillus subtilis (strain 168).